The following is a 275-amino-acid chain: NifU-like protein 5, mitochondrial (275 aa).

A mitochondrion-targeting transit peptide spans Met1–Ser61.

It belongs to the NifU family.

Its subcellular location is the mitochondrion. Functionally, molecular scaffold for [Fe-S] cluster assembly of mitochondrial iron-sulfur proteins. The polypeptide is NifU-like protein 5, mitochondrial (NIFU5) (Arabidopsis thaliana (Mouse-ear cress)).